The primary structure comprises 245 residues: MTSSRPIAHNTKNKQTKTLKGRDYAVFLQKLGYTFKQPDLLREALTHRSLGFPNNERFEFLGDSVLNCAVSTLLFKRFPSLPEGDLTRLRANFVNQQALHRLASALGIGELILLGEGERKSGGHHRPSILANAVEAIIGAIYLESGFAVVEQVIVALYEPLIRQLDPDTSGKDSKTLLQEYLQSRKIALPEYSVLLAQGDPHAQVFHVECVIPGFGIRTRGEGTSRRRAEQEAARQAYELAIVRH.

Residues 24 to 146 (YAVFLQKLGY…IIGAIYLESG (123 aa)) form the RNase III domain. Glu-59 lines the Mg(2+) pocket. Asp-63 is an active-site residue. Positions 132 and 135 each coordinate Mg(2+). The active site involves Glu-135. Residues 173 to 243 (DSKTLLQEYL…ARQAYELAIV (71 aa)) form the DRBM domain.

The protein belongs to the ribonuclease III family. Homodimer. Mg(2+) serves as cofactor.

The protein resides in the cytoplasm. It carries out the reaction Endonucleolytic cleavage to 5'-phosphomonoester.. In terms of biological role, digests double-stranded RNA. Involved in the processing of primary rRNA transcript to yield the immediate precursors to the large and small rRNAs (23S and 16S). Processes some mRNAs, and tRNAs when they are encoded in the rRNA operon. Processes pre-crRNA and tracrRNA of type II CRISPR loci if present in the organism. The protein is Ribonuclease 3 of Nitrosomonas europaea (strain ATCC 19718 / CIP 103999 / KCTC 2705 / NBRC 14298).